The sequence spans 103 residues: Cyclotide vitri-A (103 aa).

The N-terminal stretch at 1–9 (AAFALPAFA) is a signal peptide. A propeptide spanning residues 10-69 (SFEKDVITPAALEAVLNRKAPLSNIMMENDAIVNVIANVKTVISNPVLEEALLKTNHGVN) is cleaved from the precursor. A cross-link (cyclopeptide (Gly-Asn)) is located at residues 70–99 (GIPCGESCVWIPCITSAIGCSCKSKVCYRN). Cystine bridges form between Cys-73/Cys-89, Cys-77/Cys-91, and Cys-82/Cys-96. The propeptide occupies 100–103 (SLDN).

In terms of processing, this is a cyclic peptide.

In terms of biological role, probably participates in a plant defense mechanism. The sequence is that of Cyclotide vitri-A from Viola biflora (Yellow wood violet).